A 394-amino-acid chain; its full sequence is Deoxyguanosinetriphosphate triphosphohydrolase-like protein (394 aa).

The interval 1–34 (MSSSPFFVPRAPYAEDPAKSRGRRFPEDESRTRT) is disordered. Residues 16-34 (DPAKSRGRRFPEDESRTRT) are compositionally biased toward basic and acidic residues. The 141-residue stretch at 70-210 (RLTHSLEVAQ…AALADDIAYN (141 aa)) folds into the HD domain.

Belongs to the dGTPase family. Type 2 subfamily.

This Caulobacter sp. (strain K31) protein is Deoxyguanosinetriphosphate triphosphohydrolase-like protein.